The following is a 253-amino-acid chain: 5'-nucleotidase SurE (253 aa).

A divalent metal cation-binding residues include Asp-8, Asp-9, Ser-39, and Asn-91.

Belongs to the SurE nucleotidase family. Requires a divalent metal cation as cofactor.

It localises to the cytoplasm. It carries out the reaction a ribonucleoside 5'-phosphate + H2O = a ribonucleoside + phosphate. In terms of biological role, nucleotidase that shows phosphatase activity on nucleoside 5'-monophosphates. The sequence is that of 5'-nucleotidase SurE from Leptothrix cholodnii (strain ATCC 51168 / LMG 8142 / SP-6) (Leptothrix discophora (strain SP-6)).